Here is a 639-residue protein sequence, read N- to C-terminus: Sodium-dependent phosphate transport protein 2A (639 aa).

Residues 1 to 103 (MISYGENLGG…LRRAGVTLLK (103 aa)) lie on the Cytoplasmic side of the membrane. A phosphoserine mark is found at S14 and S34. The chain crosses the membrane as a helical span at residues 104 to 125 (VPLMLSFLYLFVCSLDVLSSAF). Over 126 to 145 (QLAGGKVAGDIFKDNAILSN) the chain is Extracellular. Residues 146-163 (PVAGLVVGILVTVLVQSS) traverse the membrane as a helical segment. Topologically, residues 164 to 165 (ST) are cytoplasmic. The chain crosses the membrane as a helical span at residues 166–185 (STSIVVSMVSSGLLEVSSAI). The Extracellular segment spans residues 186-347 (PIIMGSNIGT…HIFVDTGLPD (162 aa)). Disulfide bonds link C225–C522 and C306–C336. N298, N323, and N330 each carry an N-linked (GlcNAc...) asparagine glycan. A helical transmembrane segment spans residues 348-370 (LAVGLILLAGSLALLCTCLILLV). The Cytoplasmic segment spans residues 371-412 (KMLNSLLKGQVAKVIQKVINTDFPTPFTWATGYFAMVVGASM). The chain crosses the membrane as a helical span at residues 413–436 (TFVVQSSSVFTSAITPLIGLGVIS). The Extracellular portion of the chain corresponds to 437–466 (IERAYPLTLGSNIGTTTTAILAALASPREK). Residues 467–487 (LSSAFQIALCHFFFNISGILL) form a helical membrane-spanning segment. Residues 488 to 513 (WYPVPCTRLPIRMAKALGKRTAKYRW) are Cytoplasmic-facing. T508 bears the Phosphothreonine; by PKC mark. Residues 514–534 (FAVLYLLLCFLLLPSMVFGLS) form a helical membrane-spanning segment. Residues 535 to 539 (MAGWR) are Extracellular-facing. The helical transmembrane segment at 540–561 (AMVGVGAPFGALLAFVVLVSAL) threads the bilayer. Residues 562–639 (QHRSPGCLPK…MPHHHDATRL (78 aa)) lie on the Cytoplasmic side of the membrane. Position 607 is a phosphoserine (S607). The residue at position 623 (T623) is a Phosphothreonine. Phosphoserine is present on S625.

It belongs to the SLC34A transporter family. As to quaternary structure, interacts via its C-terminal region with NHERF4. Interacts with NHERF1. Interacts with TMEM174; regulates SLC34A1 internalization by PTH and FGF23.

The protein localises to the apical cell membrane. It localises to the cell membrane. The catalysed reaction is 3 Na(+)(out) + phosphate(out) = 3 Na(+)(in) + phosphate(in). Involved in actively transporting phosphate into cells via Na(+) cotransport in the renal brush border membrane. The cotransport has a Na(+):Pi stoichiometry of 3:1 and is electrogenic. The sequence is that of Sodium-dependent phosphate transport protein 2A from Ovis aries (Sheep).